Reading from the N-terminus, the 292-residue chain is Zinc finger protein OZF (292 aa).

10 C2H2-type zinc fingers span residues 16–38 (FACK…EHFH), 44–66 (FECN…QNTH), 72–94 (LECN…QKIH), 100–122 (FECK…QRTH), 128–150 (FICK…EKIH), 156–178 (FKCN…QNIH), 184–206 (YECN…VRIH), 212–234 (YECN…VRSH), 240–262 (YGCN…LRIH), and 268–290 (YQCS…QKIH). Residues Lys28, Lys51, and Lys56 each participate in a glycyl lysine isopeptide (Lys-Gly) (interchain with G-Cter in SUMO2) cross-link. Residues Lys157 and Lys169 each participate in a glycyl lysine isopeptide (Lys-Gly) (interchain with G-Cter in SUMO) cross-link. Lys173 is covalently cross-linked (Glycyl lysine isopeptide (Lys-Gly) (interchain with G-Cter in SUMO2)). Residues 212 to 292 (YECNVCGKAF…HIRHQKIHTH (81 aa)) are interaction with TERF2IP.

Belongs to the krueppel C2H2-type zinc-finger protein family. Binds DNA. Interacts with SUMO conjugating enzyme UBC9/UBE2I. Interacts with the telomeric protein TERF2IP.

It localises to the nucleus. The sequence is that of Zinc finger protein OZF (ZNF146) from Bos taurus (Bovine).